The following is a 353-amino-acid chain: UDP-N-acetylglucosamine--N-acetylmuramyl-(pentapeptide) pyrophosphoryl-undecaprenol N-acetylglucosamine transferase (353 aa).

UDP-N-acetyl-alpha-D-glucosamine-binding positions include asparagine 123, arginine 161, serine 189, isoleucine 243, 262-267 (ALTVSE), and glutamine 287.

It belongs to the glycosyltransferase 28 family. MurG subfamily.

It localises to the cell membrane. The enzyme catalyses di-trans,octa-cis-undecaprenyl diphospho-N-acetyl-alpha-D-muramoyl-L-alanyl-D-glutamyl-meso-2,6-diaminopimeloyl-D-alanyl-D-alanine + UDP-N-acetyl-alpha-D-glucosamine = di-trans,octa-cis-undecaprenyl diphospho-[N-acetyl-alpha-D-glucosaminyl-(1-&gt;4)]-N-acetyl-alpha-D-muramoyl-L-alanyl-D-glutamyl-meso-2,6-diaminopimeloyl-D-alanyl-D-alanine + UDP + H(+). Its pathway is cell wall biogenesis; peptidoglycan biosynthesis. Its function is as follows. Cell wall formation. Catalyzes the transfer of a GlcNAc subunit on undecaprenyl-pyrophosphoryl-MurNAc-pentapeptide (lipid intermediate I) to form undecaprenyl-pyrophosphoryl-MurNAc-(pentapeptide)GlcNAc (lipid intermediate II). The sequence is that of UDP-N-acetylglucosamine--N-acetylmuramyl-(pentapeptide) pyrophosphoryl-undecaprenol N-acetylglucosamine transferase from Buchnera aphidicola subsp. Baizongia pistaciae (strain Bp).